The primary structure comprises 299 residues: Ribosomal protein L11 methyltransferase (299 aa).

S-adenosyl-L-methionine-binding residues include threonine 152, glycine 172, aspartate 194, and asparagine 234.

Belongs to the methyltransferase superfamily. PrmA family.

It is found in the cytoplasm. It catalyses the reaction L-lysyl-[protein] + 3 S-adenosyl-L-methionine = N(6),N(6),N(6)-trimethyl-L-lysyl-[protein] + 3 S-adenosyl-L-homocysteine + 3 H(+). Methylates ribosomal protein L11. This chain is Ribosomal protein L11 methyltransferase, found in Geobacter metallireducens (strain ATCC 53774 / DSM 7210 / GS-15).